The primary structure comprises 379 residues: Deoxyhypusine synthase (379 aa).

Residues 108–112 (SNLIS), 134–136 (TAG), Glu-140, and Asp-257 each bind NAD(+). 139–140 (EE) contributes to the spermidine binding site. Asp-262 serves as a coordination point for spermidine. Residue Gly-304 participates in NAD(+) binding. Spermidine is bound at residue His-309. Residue 329 to 330 (TG) participates in NAD(+) binding. Spermidine contacts are provided by residues 335–337 (GSD) and 344–350 (EAVSWGK). Residue Lys-350 is the Nucleophile of the active site. 363–364 (DA) contributes to the NAD(+) binding site.

It belongs to the deoxyhypusine synthase family. NAD(+) is required as a cofactor.

It catalyses the reaction [eIF5A protein]-L-lysine + spermidine = [eIF5A protein]-deoxyhypusine + propane-1,3-diamine. Its pathway is protein modification; eIF5A hypusination. Its function is as follows. Catalyzes the NAD-dependent oxidative cleavage of spermidine and the subsequent transfer of the butylamine moiety of spermidine to the epsilon-amino group of a specific lysine residue of the eIF-5A precursor protein to form the intermediate deoxyhypusine residue. In Kluyveromyces lactis (strain ATCC 8585 / CBS 2359 / DSM 70799 / NBRC 1267 / NRRL Y-1140 / WM37) (Yeast), this protein is Deoxyhypusine synthase (DYS1).